The primary structure comprises 65 residues: Large ribosomal subunit protein bL35 (65 aa).

Belongs to the bacterial ribosomal protein bL35 family.

The protein is Large ribosomal subunit protein bL35 of Clostridium botulinum (strain Loch Maree / Type A3).